The following is a 215-amino-acid chain: MSACLGFRELGLQPYEPVLEAMRRFTEQRSPDSQDEIWLVEHPAVFTQGQAGKAEHLLVPGDIPVVQTDRGGQVTYHGPGQLVAYLLLDVRRLGFGVRELVSRIELALIDLLASYAVQASAKPDAPGVYVDGAKIASLGLRIRNGRSFHGLALNVDMDLAPFRRINPCGYAGLAMTQLRDLAGPIELDEVRTRLRGQLVKHLDYAEQTTLTGGID.

The 176-residue stretch at 31 to 206 (PDSQDEIWLV…QLVKHLDYAE (176 aa)) folds into the BPL/LPL catalytic domain. Substrate contacts are provided by residues 70–77 (RGGQVTYH), 137–139 (SLG), and 150–152 (GLA). Cys168 (acyl-thioester intermediate) is an active-site residue.

The protein belongs to the LipB family.

It is found in the cytoplasm. It catalyses the reaction octanoyl-[ACP] + L-lysyl-[protein] = N(6)-octanoyl-L-lysyl-[protein] + holo-[ACP] + H(+). It participates in protein modification; protein lipoylation via endogenous pathway; protein N(6)-(lipoyl)lysine from octanoyl-[acyl-carrier-protein]: step 1/2. Functionally, catalyzes the transfer of endogenously produced octanoic acid from octanoyl-acyl-carrier-protein onto the lipoyl domains of lipoate-dependent enzymes. Lipoyl-ACP can also act as a substrate although octanoyl-ACP is likely to be the physiological substrate. The polypeptide is Octanoyltransferase (Pseudomonas putida (strain ATCC 700007 / DSM 6899 / JCM 31910 / BCRC 17059 / LMG 24140 / F1)).